Reading from the N-terminus, the 163-residue chain is Nucleotide-binding protein BA_1166 (163 aa).

The protein belongs to the YajQ family.

Nucleotide-binding protein. This Bacillus anthracis protein is Nucleotide-binding protein BA_1166.